Here is a 264-residue protein sequence, read N- to C-terminus: Phosphoinositide-3-kinase-interacting protein 1 (264 aa).

Residues methionine 1–glycine 21 form the signal peptide. Topologically, residues serine 22–leucine 170 are extracellular. The region spanning glycine 24–cysteine 101 is the Kringle domain. Intrachain disulfides connect cysteine 25–cysteine 101, cysteine 46–cysteine 82, and cysteine 70–cysteine 96. Positions arginine 94–alanine 129 are disordered. A compositionally biased stretch (basic and acidic residues) spans leucine 117 to alanine 129. A helical membrane pass occupies residues glycine 171 to valine 191. Over glycine 192 to alanine 264 the chain is Cytoplasmic.

It localises to the cell membrane. Negative regulator of hepatic phosphatidylinositol 3-kinase (PI3K) activity. The chain is Phosphoinositide-3-kinase-interacting protein 1 (Pik3ip1) from Mus musculus (Mouse).